Consider the following 137-residue polypeptide: Nucleoside diphosphate kinase (137 aa).

Residues K9, F58, R86, T92, R103, and N113 each coordinate ATP. The Pros-phosphohistidine intermediate role is filled by H121.

Belongs to the NDK family. Homotetramer. It depends on Mg(2+) as a cofactor.

It localises to the cytoplasm. The catalysed reaction is a 2'-deoxyribonucleoside 5'-diphosphate + ATP = a 2'-deoxyribonucleoside 5'-triphosphate + ADP. It carries out the reaction a ribonucleoside 5'-diphosphate + ATP = a ribonucleoside 5'-triphosphate + ADP. Major role in the synthesis of nucleoside triphosphates other than ATP. The ATP gamma phosphate is transferred to the NDP beta phosphate via a ping-pong mechanism, using a phosphorylated active-site intermediate. This chain is Nucleoside diphosphate kinase, found in Streptococcus pneumoniae (strain Hungary19A-6).